A 1177-amino-acid polypeptide reads, in one-letter code: Lysylphosphatidylglycerol biosynthesis bifunctional protein LysX (1177 aa).

Disordered regions lie at residues 1–40 (MRRA…AKFV) and 61–85 (VTLA…PANR). The tract at residues 1 to 676 (MRRAGRSRQF…LLHHDGSAPD (676 aa)) is phosphatidylglycerol lysyltransferase. A compositionally biased stretch (polar residues) spans 8–21 (RQFSSVEEAFSTSA). Residues 65–82 (SPGSRSGSGPRSGPRLGP) are compositionally biased toward low complexity. The next 6 membrane-spanning stretches (helical) occupy residues 93–113 (VPAA…LGSV), 135–155 (FPDT…ALTA), 159–179 (IAWL…VADI), 189–209 (IFGE…LVLA), 227–247 (AVLV…VELF), and 281–301 (VFLN…ATIV). The interval 673–693 (SAPDVSGLRPERTDAEEARSR) is disordered. The lysine--tRNA ligase stretch occupies residues 677–1177 (VSGLRPERTD…TLPFPLAKPH (501 aa)). Basic and acidic residues predominate over residues 681–693 (RPERTDAEEARSR). The Mg(2+) site is built by Asp-1089 and Glu-1096.

It in the N-terminal section; belongs to the LPG synthetase family. The protein in the C-terminal section; belongs to the class-II aminoacyl-tRNA synthetase family. Mg(2+) serves as cofactor.

The protein resides in the cell membrane. It carries out the reaction tRNA(Lys) + L-lysine + ATP = L-lysyl-tRNA(Lys) + AMP + diphosphate. It catalyses the reaction L-lysyl-tRNA(Lys) + a 1,2-diacyl-sn-glycero-3-phospho-(1'-sn-glycerol) = a 1,2-diacyl-sn-glycero-3-phospho-1'-(3'-O-L-lysyl)-sn-glycerol + tRNA(Lys). Its function is as follows. Catalyzes the production of L-lysyl-tRNA(Lys)transfer and the transfer of a lysyl group from L-lysyl-tRNA(Lys) to membrane-bound phosphatidylglycerol (PG), which produces lysylphosphatidylglycerol (LPG), one of the components of the bacterial membrane with a positive net charge. LPG synthesis contributes to the resistance to cationic antimicrobial peptides (CAMPs) and likely protects M.tuberculosis against the CAMPs produced by competiting microorganisms (bacteriocins). In fact, the modification of anionic phosphatidylglycerol with positively charged L-lysine results in repulsion of the peptides. The sequence is that of Lysylphosphatidylglycerol biosynthesis bifunctional protein LysX (lysX) from Mycobacterium avium (strain 104).